Here is a 444-residue protein sequence, read N- to C-terminus: Endothelin-3 receptor (444 aa).

The first 18 residues, Met-1–Val-18, serve as a signal peptide directing secretion. The Extracellular segment spans residues Cys-19–Lys-88. A glycan (N-linked (GlcNAc...) asparagine) is linked at Asn-60. The chain crosses the membrane as a helical span at residues Tyr-89 to Ile-113. Residues Tyr-114–Asn-124 are Cytoplasmic-facing. Residues Val-125–Ile-145 traverse the membrane as a helical segment. Residues Ser-146–Gln-161 lie on the Extracellular side of the membrane. A helical transmembrane segment spans residues Leu-162 to Ile-180. The Cytoplasmic portion of the chain corresponds to Asp-181–Lys-201. The chain crosses the membrane as a helical span at residues Ala-202–Val-226. Topologically, residues Glu-227 to Glu-254 are extracellular. A helical membrane pass occupies residues Val-255–Met-279. Residues Ser-280 to Thr-307 lie on the Cytoplasmic side of the membrane. The helical transmembrane segment at Val-308 to Phe-328 threads the bilayer. Residues Val-329 to Asn-365 lie on the Extracellular side of the membrane. Residues Tyr-366–Val-386 form a helical membrane-spanning segment. The Cytoplasmic segment spans residues Ser-387–Ser-444. The interval Gly-416–Ser-444 is disordered. Basic and acidic residues predominate over residues Asn-424–Ser-434. Low complexity predominate over residues Ser-435 to Ser-444.

The protein belongs to the G-protein coupled receptor 1 family. Endothelin receptor subfamily.

It localises to the cell membrane. In terms of biological role, receptor for endothelin-3. Mediates its action by association with G proteins that activate a phosphatidylinositol-calcium second messenger system. This Xenopus laevis (African clawed frog) protein is Endothelin-3 receptor.